The primary structure comprises 78 residues: U7-lycotoxin-Ls1h (78 aa).

The N-terminal stretch at 1-22 (MKLIIFTGLTLLLIVSLIDVEA) is a signal peptide. The propeptide occupies 23–26 (QNEG).

The protein belongs to the neurotoxin 19 (CSTX) family. 07 (U7-Lctx) subfamily. Post-translationally, contains 4 disulfide bonds. In terms of tissue distribution, expressed by the venom gland.

It localises to the secreted. This is U7-lycotoxin-Ls1h from Lycosa singoriensis (Wolf spider).